A 201-amino-acid chain; its full sequence is Lipoprotein signal peptidase (201 aa).

2 helical membrane-spanning segments follow: residues 73 to 93 (SNAIFLITNTIIVCYLYYLMI) and 97 to 117 (TIGSFAGYSFVIGGAVGNLID). Active-site residues include aspartate 126 and aspartate 144. A helical transmembrane segment spans residues 135-155 (YSFPVFNLADCFIIIGVIILI).

It belongs to the peptidase A8 family.

Its subcellular location is the cell inner membrane. The catalysed reaction is Release of signal peptides from bacterial membrane prolipoproteins. Hydrolyzes -Xaa-Yaa-Zaa-|-(S,diacylglyceryl)Cys-, in which Xaa is hydrophobic (preferably Leu), and Yaa (Ala or Ser) and Zaa (Gly or Ala) have small, neutral side chains.. The protein operates within protein modification; lipoprotein biosynthesis (signal peptide cleavage). This protein specifically catalyzes the removal of signal peptides from prolipoproteins. This chain is Lipoprotein signal peptidase, found in Rickettsia conorii (strain ATCC VR-613 / Malish 7).